An 829-amino-acid chain; its full sequence is Periplasmic nitrate reductase (829 aa).

The tat-type signal signal peptide spans 1–30 (MKMTRRAFVKANAAASAAAVAGITLPASAA). Positions 41–97 (ITWDKAPCRFCGTGCSVLVGTQNGKVVATQGDPEAPVNKGLNCIKGYFLSKIMYGQD) constitute a 4Fe-4S Mo/W bis-MGD-type domain. Cysteine 48, cysteine 51, cysteine 55, and cysteine 83 together coordinate [4Fe-4S] cluster. Residues lysine 85, glutamine 152, asparagine 177, cysteine 181, 214–221 (WGSNMAEM), 245–249 (STYYH), 264–266 (QSD), methionine 374, glutamine 378, asparagine 484, 510–511 (SD), lysine 533, aspartate 560, and 718–727 (TGRVLEHWHT) contribute to the Mo-bis(molybdopterin guanine dinucleotide) site. Position 794 (phenylalanine 794) interacts with substrate. Asparagine 802 and lysine 819 together coordinate Mo-bis(molybdopterin guanine dinucleotide).

Belongs to the prokaryotic molybdopterin-containing oxidoreductase family. NasA/NapA/NarB subfamily. Component of the periplasmic nitrate reductase NapAB complex composed of NapA and NapB. Requires [4Fe-4S] cluster as cofactor. The cofactor is Mo-bis(molybdopterin guanine dinucleotide). In terms of processing, predicted to be exported by the Tat system. The position of the signal peptide cleavage has not been experimentally proven.

It is found in the periplasm. The catalysed reaction is 2 Fe(II)-[cytochrome] + nitrate + 2 H(+) = 2 Fe(III)-[cytochrome] + nitrite + H2O. Catalytic subunit of the periplasmic nitrate reductase complex NapAB. Receives electrons from NapB and catalyzes the reduction of nitrate to nitrite. This chain is Periplasmic nitrate reductase, found in Vibrio parahaemolyticus serotype O3:K6 (strain RIMD 2210633).